A 466-amino-acid chain; its full sequence is Glutamate--tRNA ligase (466 aa).

A 'HIGH' region motif is present at residues 10–20; it reads PSPTGFLHIGG. The short motif at 252–256 is the 'KMSKS' region element; it reads KLSKR. Lys-255 provides a ligand contact to ATP.

The protein belongs to the class-I aminoacyl-tRNA synthetase family. Glutamate--tRNA ligase type 1 subfamily. As to quaternary structure, monomer.

The protein localises to the cytoplasm. It carries out the reaction tRNA(Glu) + L-glutamate + ATP = L-glutamyl-tRNA(Glu) + AMP + diphosphate. Catalyzes the attachment of glutamate to tRNA(Glu) in a two-step reaction: glutamate is first activated by ATP to form Glu-AMP and then transferred to the acceptor end of tRNA(Glu). This chain is Glutamate--tRNA ligase, found in Mycoplasmopsis synoviae (strain 53) (Mycoplasma synoviae).